Here is an 843-residue protein sequence, read N- to C-terminus: Protein P (843 aa).

Residues 1–177 are terminal protein domain (TP); the sequence is MPLSYQHFRK…FCGSPYSWEQ (177 aa). Positions 178–346 are spacer; it reads ELQHGRLVFQ…YCLSHIVNLL (169 aa). Disordered stretches follow at residues 218–243 and 290–316; these read LKQS…SGSI and STSK…RSQS. A compositionally biased stretch (polar residues) spans 290–299; sequence STSKRQSSSG. The segment at 347–690 is polymerase/reverse transcriptase domain (RT); it reads EDWGPCTEHG…YLHLYPVARQ (344 aa). Residues 357–600 enclose the Reverse transcriptase domain; sequence EHNIRIPRTP…YSLNFMGYVI (244 aa). Mg(2+)-binding residues include D429, D551, and D552.

The protein belongs to the hepadnaviridae P protein family.

The enzyme catalyses DNA(n) + a 2'-deoxyribonucleoside 5'-triphosphate = DNA(n+1) + diphosphate. It carries out the reaction Endonucleolytic cleavage to 5'-phosphomonoester.. With respect to regulation, activated by host HSP70 and HSP40 in vitro to be able to bind the epsilon loop of the pgRNA. Because deletion of the RNase H region renders the protein partly chaperone-independent, the chaperones may be needed indirectly to relieve occlusion of the RNA-binding site by this domain. Inhibited by several reverse-transcriptase inhibitors: Lamivudine, Adefovir and Entecavir. Its function is as follows. Multifunctional enzyme that converts the viral RNA genome into dsDNA in viral cytoplasmic capsids. This enzyme displays a DNA polymerase activity that can copy either DNA or RNA templates, and a ribonuclease H (RNase H) activity that cleaves the RNA strand of RNA-DNA heteroduplexes in a partially processive 3'- to 5'-endonucleasic mode. Neo-synthesized pregenomic RNA (pgRNA) are encapsidated together with the P protein, and reverse-transcribed inside the nucleocapsid. Initiation of reverse-transcription occurs first by binding the epsilon loop on the pgRNA genome, and is initiated by protein priming, thereby the 5'-end of (-)DNA is covalently linked to P protein. Partial (+)DNA is synthesized from the (-)DNA template and generates the relaxed circular DNA (RC-DNA) genome. After budding and infection, the RC-DNA migrates in the nucleus, and is converted into a plasmid-like covalently closed circular DNA (cccDNA). The activity of P protein does not seem to be necessary for cccDNA generation, and is presumably released from (+)DNA by host nuclear DNA repair machinery. The sequence is that of Protein P from Homo sapiens (Human).